We begin with the raw amino-acid sequence, 466 residues long: Dihydrolipoyl dehydrogenase (466 aa).

FAD contacts are provided by residues 34-42 (ERVHLGGIC), Lys51, and Gly114. Cys42 and Cys47 are disulfide-bonded. NAD(+) is bound by residues 180 to 184 (GSGAI), Glu203, and 269 to 272 (AIGV). Asp311 and Ala319 together coordinate FAD. His445 functions as the Proton acceptor in the catalytic mechanism.

Belongs to the class-I pyridine nucleotide-disulfide oxidoreductase family. Homodimer. Requires FAD as cofactor.

It localises to the cytoplasm. It catalyses the reaction N(6)-[(R)-dihydrolipoyl]-L-lysyl-[protein] + NAD(+) = N(6)-[(R)-lipoyl]-L-lysyl-[protein] + NADH + H(+). Its function is as follows. Lipoamide dehydrogenase is a component of the alpha-ketoacid dehydrogenase complexes. This Zymomonas mobilis subsp. mobilis (strain ATCC 31821 / ZM4 / CP4) protein is Dihydrolipoyl dehydrogenase (lpd).